Here is a 603-residue protein sequence, read N- to C-terminus: F-box only protein 46 (603 aa).

Positions Y20 to E54 are disordered. 2 positions are modified to phosphoserine: S21 and S67. Disordered regions lie at residues G111–S163, E235–K301, E332–C359, and T396–D442. At T347 the chain carries Phosphothreonine. The span at T347–A356 shows a compositional bias: pro residues. Positions R470–D522 constitute an F-box domain.

In terms of assembly, part of a SCF (SKP1-cullin-F-box) protein ligase complex SCF(FBXO46) composed of CUL1, SKP1, RBX1 and FBXO46. In terms of processing, phosphorylated by ATM in response to DNA damage, promoting ubiquitination and degradation by the SCF(FBXO31) complex. ATM-phosphorylated FBXO46 is ubiquitinated and degradaded by the SCF(FBXO31) complex in response to DNA damage.

Its pathway is protein modification; protein ubiquitination. Functionally, substrate-recognition component of the SCF(FBXO46) protein ligase complex, which mediates the ubiquitination and degradation of target proteins. In absence of stress, the SCF(FBXO46) complex catalyzes ubiquitination and degradation of MTOR-phosphorylated FBXO31. The chain is F-box only protein 46 (Fbxo46) from Rattus norvegicus (Rat).